Reading from the N-terminus, the 141-residue chain is Nucleoside diphosphate kinase (141 aa).

Positions 11, 59, 87, 93, 104, and 114 each coordinate ATP. H117 acts as the Pros-phosphohistidine intermediate in catalysis.

It belongs to the NDK family. As to quaternary structure, homotetramer. Requires Mg(2+) as cofactor.

The protein resides in the cytoplasm. The catalysed reaction is a 2'-deoxyribonucleoside 5'-diphosphate + ATP = a 2'-deoxyribonucleoside 5'-triphosphate + ADP. The enzyme catalyses a ribonucleoside 5'-diphosphate + ATP = a ribonucleoside 5'-triphosphate + ADP. Its function is as follows. Major role in the synthesis of nucleoside triphosphates other than ATP. The ATP gamma phosphate is transferred to the NDP beta phosphate via a ping-pong mechanism, using a phosphorylated active-site intermediate. In Neisseria meningitidis serogroup A / serotype 4A (strain DSM 15465 / Z2491), this protein is Nucleoside diphosphate kinase.